A 304-amino-acid chain; its full sequence is Olfactory receptor 52A4 (304 aa).

Residues 1-32 lie on the Extracellular side of the membrane; sequence MALPITNGTLFMPFVLTFIGIPGFESVQCWIG. Residue Asn7 is glycosylated (N-linked (GlcNAc...) asparagine). A helical membrane pass occupies residues 33-53; it reads IPFCATYVIALIGNSLLLIII. Residues 54 to 61 are Cytoplasmic-facing; it reads KSEPSLHE. Residues 62-82 traverse the membrane as a helical segment; it reads PMYIFLATLGATDISLSTSIV. Residues 83–103 lie on the Extracellular side of the membrane; that stretch reads PKMLDIFWFHLPEIYFDACLF. The cysteines at positions 101 and 184 are disulfide-linked. Residues 104–124 form a helical membrane-spanning segment; that stretch reads QMWLIHTFQGIESGVLLAMAL. The Cytoplasmic segment spans residues 125–146; it reads DRCVAICYPLRRAIVFTRQLVT. The helical transmembrane segment at 147–167 threads the bilayer; sequence YIVVGVTLRPAILVIPCLLLI. Over 168–203 the chain is Extracellular; it reads KCHLKLYRTKLIYHTYCERVALVKLATEDVYINKVY. Residues 204-224 form a helical membrane-spanning segment; sequence GILGAFIVGGLDFIFITLSYI. Residues 225 to 255 are Cytoplasmic-facing; it reads QIFITVFHLPLKEARLKVFNTCIPHIYVFFQ. Residues 256–276 form a helical membrane-spanning segment; sequence FYLLAFFFIFYSQIWILYPII. The Extracellular segment spans residues 277–279; the sequence is CTY. Residues 280–300 traverse the membrane as a helical segment; the sequence is HLVQSLPTGPTIPQPLYLWVK. At 301-304 the chain is on the cytoplasmic side; it reads DQTH.

It belongs to the G-protein coupled receptor 1 family.

The protein localises to the cell membrane. Its function is as follows. Odorant receptor. The sequence is that of Olfactory receptor 52A4 from Homo sapiens (Human).